We begin with the raw amino-acid sequence, 175 residues long: Endothelin-2 (175 aa).

Positions 1–21 (MVSAWCSIALALLLALHEGKG) are cleaved as a signal peptide. A propeptide spanning residues 22–43 (QAAATLEQPASAPKGRGPHLRF) is cleaved from the precursor. 2 disulfides stabilise this stretch: Cys46–Cys60 and Cys48–Cys56. Positions 67 to 175 (VNTAGQTAPY…IPAYSRWRKR (109 aa)) are excised as a propeptide. An endothelin-like region spans residues 93 to 108 (CECSTAGDSACATFCH).

It belongs to the endothelin/sarafotoxin family.

Its subcellular location is the secreted. In terms of biological role, vasoconstrictor. The protein is Endothelin-2 (Edn2) of Mus musculus (Mouse).